Consider the following 424-residue polypeptide: 5-methylthioadenosine/S-adenosylhomocysteine deaminase (424 aa).

Residues His-60 and His-62 each coordinate Zn(2+). Residues Glu-89 and His-181 each contribute to the substrate site. His-208 lines the Zn(2+) pocket. Substrate-binding residues include Glu-211 and Asp-296. Position 296 (Asp-296) interacts with Zn(2+).

It belongs to the metallo-dependent hydrolases superfamily. MTA/SAH deaminase family. Zn(2+) serves as cofactor.

The enzyme catalyses S-adenosyl-L-homocysteine + H2O + H(+) = S-inosyl-L-homocysteine + NH4(+). It carries out the reaction S-methyl-5'-thioadenosine + H2O + H(+) = S-methyl-5'-thioinosine + NH4(+). Its function is as follows. Catalyzes the deamination of 5-methylthioadenosine and S-adenosyl-L-homocysteine into 5-methylthioinosine and S-inosyl-L-homocysteine, respectively. Is also able to deaminate adenosine. This Thermococcus kodakarensis (strain ATCC BAA-918 / JCM 12380 / KOD1) (Pyrococcus kodakaraensis (strain KOD1)) protein is 5-methylthioadenosine/S-adenosylhomocysteine deaminase.